We begin with the raw amino-acid sequence, 73 residues long: MKFLLSVIAGLLILALYLFWKVQPPVWIQVETNSSQLKQSVRMAGTTLQVKHMIKSDAGEETAVISNGISGLK.

The N-terminal stretch at 1–28 (MKFLLSVIAGLLILALYLFWKVQPPVWI) is a signal peptide.

This is an uncharacterized protein from Bacillus subtilis (strain 168).